A 149-amino-acid polypeptide reads, in one-letter code: UPF0260 protein PSPPH_1551 (149 aa).

The protein belongs to the UPF0260 family.

This is UPF0260 protein PSPPH_1551 from Pseudomonas savastanoi pv. phaseolicola (strain 1448A / Race 6) (Pseudomonas syringae pv. phaseolicola (strain 1448A / Race 6)).